A 535-amino-acid polypeptide reads, in one-letter code: EGF domain-specific O-linked N-acetylglucosamine transferase (535 aa).

Residues 1–16 (MFILLMFVLLLQEILA) form the signal peptide. Asn-22 and Asn-271 each carry an N-linked (GlcNAc...) asparagine glycan. The short motif at 303-305 (DYD) is the Required for optimal activity element. Asn-362 and Asn-501 each carry an N-linked (GlcNAc...) asparagine glycan.

This sequence belongs to the glycosyltransferase 61 family.

Its subcellular location is the endoplasmic reticulum lumen. The catalysed reaction is L-seryl-[protein] + UDP-N-acetyl-alpha-D-glucosamine = 3-O-(N-acetyl-beta-D-glucosaminyl)-L-seryl-[protein] + UDP + H(+). It carries out the reaction L-threonyl-[protein] + UDP-N-acetyl-alpha-D-glucosamine = 3-O-(N-acetyl-beta-D-glucosaminyl)-L-threonyl-[protein] + UDP + H(+). Its function is as follows. Catalyzes the transfer of a single N-acetylglucosamine from UDP-GlcNAc to a serine or threonine residue in extracellular proteins resulting in their modification with a beta-linked N-acetylglucosamine (O-GlcNAc). Specifically glycosylates the Thr residue located between the fifth and sixth conserved cysteines of folded EGF-like domains. The chain is EGF domain-specific O-linked N-acetylglucosamine transferase (EOGT) from Gallus gallus (Chicken).